The primary structure comprises 331 residues: tRNA N6-adenosine threonylcarbamoyltransferase (331 aa).

3 residues coordinate Fe cation: H109, H113, and Y130. Residues 130-134, D162, D183, and S262 contribute to the substrate site; that span reads YLSGG. Residue D290 coordinates Fe cation.

The protein belongs to the KAE1 / TsaD family. The cofactor is Fe(2+).

Its subcellular location is the cytoplasm. The enzyme catalyses L-threonylcarbamoyladenylate + adenosine(37) in tRNA = N(6)-L-threonylcarbamoyladenosine(37) in tRNA + AMP + H(+). Required for the formation of a threonylcarbamoyl group on adenosine at position 37 (t(6)A37) in tRNAs that read codons beginning with adenine. Is probably involved in the transfer of the threonylcarbamoyl moiety of threonylcarbamoyl-AMP (TC-AMP) to the N6 group of A37. This chain is tRNA N6-adenosine threonylcarbamoyltransferase, found in Saccharolobus islandicus (strain Y.G.57.14 / Yellowstone #1) (Sulfolobus islandicus).